The chain runs to 295 residues: MDALALMSASNPAWSAWPAPAKLNLFLQIVGRRADGYHLLQTVFRLLDWGDTVHVRLRTDGQIQRIGASLPGVAEDDDLMVRAARALQIHAGTALGAELRVDKRIPAGGGFGGGSSDAATVLVALNALWGLGLPVDTLAELGLRLGADVPVFVRGHNAWAEGVGEKLTPISLPQAAYVLVDPGIHVPTPVLFQSQELTRDAAPAKIADFASGSLLDNAFEPVLRRREPAIEAVFQALSRIGTPRLTGSGSGCFVEFATRAAAEQAMAHLPGNLRAWVVEGAAHSPLLDALDAIQV.

The active site involves Lys-22. 106–116 (PAGGGFGGGSS) is an ATP binding site. The active site involves Asp-148.

Belongs to the GHMP kinase family. IspE subfamily.

It catalyses the reaction 4-CDP-2-C-methyl-D-erythritol + ATP = 4-CDP-2-C-methyl-D-erythritol 2-phosphate + ADP + H(+). The protein operates within isoprenoid biosynthesis; isopentenyl diphosphate biosynthesis via DXP pathway; isopentenyl diphosphate from 1-deoxy-D-xylulose 5-phosphate: step 3/6. In terms of biological role, catalyzes the phosphorylation of the position 2 hydroxy group of 4-diphosphocytidyl-2C-methyl-D-erythritol. This chain is 4-diphosphocytidyl-2-C-methyl-D-erythritol kinase, found in Xanthomonas campestris pv. campestris (strain 8004).